We begin with the raw amino-acid sequence, 428 residues long: Serine--tRNA ligase (428 aa).

Residue 235–237 (TAE) participates in L-serine binding. 266 to 268 (RYE) is an ATP binding site. Glutamate 289 serves as a coordination point for L-serine. Residue 353–356 (EVSS) participates in ATP binding. Serine 389 contributes to the L-serine binding site.

It belongs to the class-II aminoacyl-tRNA synthetase family. Type-1 seryl-tRNA synthetase subfamily. Homodimer. The tRNA molecule binds across the dimer.

It localises to the cytoplasm. It catalyses the reaction tRNA(Ser) + L-serine + ATP = L-seryl-tRNA(Ser) + AMP + diphosphate + H(+). The catalysed reaction is tRNA(Sec) + L-serine + ATP = L-seryl-tRNA(Sec) + AMP + diphosphate + H(+). Its pathway is aminoacyl-tRNA biosynthesis; selenocysteinyl-tRNA(Sec) biosynthesis; L-seryl-tRNA(Sec) from L-serine and tRNA(Sec): step 1/1. Catalyzes the attachment of serine to tRNA(Ser). Is also able to aminoacylate tRNA(Sec) with serine, to form the misacylated tRNA L-seryl-tRNA(Sec), which will be further converted into selenocysteinyl-tRNA(Sec). The polypeptide is Serine--tRNA ligase (Blochmanniella pennsylvanica (strain BPEN)).